The sequence spans 627 residues: Chaperone protein HtpG (627 aa).

An a; substrate-binding region spans residues 1–339 (MKGQETRGFQ…SNDLPLNVSR (339 aa)). The tract at residues 340-555 (EILQDSRVTQ…ADEMSTQMAK (216 aa)) is b. Residues 556 to 627 (LFAAAGQQAP…IRRMNQLLSA (72 aa)) are c.

This sequence belongs to the heat shock protein 90 family. In terms of assembly, homodimer.

It localises to the cytoplasm. In terms of biological role, molecular chaperone. Has ATPase activity. In Pectobacterium atrosepticum (strain SCRI 1043 / ATCC BAA-672) (Erwinia carotovora subsp. atroseptica), this protein is Chaperone protein HtpG.